The chain runs to 518 residues: Calcium-dependent protein kinase 1 (518 aa).

Over residues 1 to 10 (MGNRTSRHHR) the composition is skewed to basic residues. A disordered region spans residues 1 to 49 (MGNRTSRHHRAAPEQPPPQPKPKPQPQQQQQQWPRPQQPTPPPAAAPDA). The N-myristoyl glycine moiety is linked to residue glycine 2. The segment covering 14-25 (EQPPPQPKPKPQ) has biased composition (pro residues). Over residues 26–35 (PQQQQQQWPR) the composition is skewed to low complexity. Residues 36 to 45 (PQQPTPPPAA) are compositionally biased toward pro residues. The 259-residue stretch at 66-324 (YTFGRELGRG…SAEILNHPWI (259 aa)) folds into the Protein kinase domain. Residues 72–80 (LGRGQFGVT) and lysine 95 contribute to the ATP site. Aspartate 190 serves as the catalytic Proton acceptor. Residues 330–360 (APDKPLDITVISRMKQFRAMNKLKKVALKVV) are autoinhibitory domain. EF-hand domains follow at residues 367–402 (EEITGLKEMFRSLDTDNSGTITLEELRSGLPKLGTK), 403–438 (ISESEIRQLMEAADVDGNGTIDYAEFISATMHMNRL), 439–474 (EKEDHILKAFEYFDKDHSGYITVDELEEALKKYDMG), and 475–509 (DDKTIKEIIAEVDTDHDGRINYQEFVAMMRNNNPE). The Ca(2+) site is built by aspartate 380, aspartate 382, serine 384, threonine 386, glutamate 391, aspartate 416, aspartate 418, asparagine 420, threonine 422, glutamate 427, aspartate 452, aspartate 454, serine 456, tyrosine 458, glutamate 463, aspartate 487, aspartate 489, aspartate 491, arginine 493, and glutamate 498.

This sequence belongs to the protein kinase superfamily. Ser/Thr protein kinase family. CDPK subfamily. In terms of tissue distribution, expressed in roots and leaf blades.

It is found in the membrane. It carries out the reaction L-seryl-[protein] + ATP = O-phospho-L-seryl-[protein] + ADP + H(+). It catalyses the reaction L-threonyl-[protein] + ATP = O-phospho-L-threonyl-[protein] + ADP + H(+). Activated by calcium. Autophosphorylation may play an important role in the regulation of the kinase activity. May play a role in signal transduction pathways that involve calcium as a second messenger. The polypeptide is Calcium-dependent protein kinase 1 (Oryza sativa subsp. japonica (Rice)).